A 485-amino-acid polypeptide reads, in one-letter code: Ribulose bisphosphate carboxylase large chain (485 aa).

The propeptide occupies 1 to 2; it reads MS. Pro3 carries the N-acetylproline modification. Lys14 carries the N6,N6,N6-trimethyllysine modification. Substrate-binding residues include Asn123 and Thr173. Residue Lys175 is the Proton acceptor of the active site. A substrate-binding site is contributed by Lys177. Mg(2+)-binding residues include Lys201, Asp203, and Glu204. Lys201 is subject to N6-carboxylysine. His294 functions as the Proton acceptor in the catalytic mechanism. Substrate is bound by residues Arg295, His327, and Ser379.

The protein belongs to the RuBisCO large chain family. Type I subfamily. As to quaternary structure, heterohexadecamer of 8 large chains and 8 small chains; disulfide-linked. The disulfide link is formed within the large subunit homodimers. Requires Mg(2+) as cofactor. The disulfide bond which can form in the large chain dimeric partners within the hexadecamer appears to be associated with oxidative stress and protein turnover.

It is found in the plastid. The protein resides in the chloroplast. It carries out the reaction 2 (2R)-3-phosphoglycerate + 2 H(+) = D-ribulose 1,5-bisphosphate + CO2 + H2O. It catalyses the reaction D-ribulose 1,5-bisphosphate + O2 = 2-phosphoglycolate + (2R)-3-phosphoglycerate + 2 H(+). Functionally, ruBisCO catalyzes two reactions: the carboxylation of D-ribulose 1,5-bisphosphate, the primary event in carbon dioxide fixation, as well as the oxidative fragmentation of the pentose substrate in the photorespiration process. Both reactions occur simultaneously and in competition at the same active site. This chain is Ribulose bisphosphate carboxylase large chain, found in Flaveria pringlei.